Consider the following 227-residue polypeptide: Ribonuclease 3 (227 aa).

The region spanning Phe4–Asp133 is the RNase III domain. Glu46 is a Mg(2+) binding site. Asp50 is an active-site residue. Asn119 and Glu122 together coordinate Mg(2+). Glu122 is an active-site residue. Positions Asp158–Leu226 constitute a DRBM domain.

This sequence belongs to the ribonuclease III family. As to quaternary structure, homodimer. Requires Mg(2+) as cofactor.

The protein localises to the cytoplasm. The catalysed reaction is Endonucleolytic cleavage to 5'-phosphomonoester.. Its function is as follows. Digests double-stranded RNA. Involved in the processing of primary rRNA transcript to yield the immediate precursors to the large and small rRNAs (23S and 16S). Processes some mRNAs, and tRNAs when they are encoded in the rRNA operon. Processes pre-crRNA and tracrRNA of type II CRISPR loci if present in the organism. This chain is Ribonuclease 3, found in Rickettsia bellii (strain OSU 85-389).